The primary structure comprises 423 residues: DUF21 domain-containing protein At2g14520 (423 aa).

Over 1–11 (MAVEYECCGTS) the chain is Extracellular. Positions 8–191 (CGTSFFIHIA…GKGGELTHDE (184 aa)) constitute a CNNM transmembrane domain. The chain crosses the membrane as a helical span at residues 12 to 32 (FFIHIAVIVLLVLFAGLMSGL). Residues 33 to 70 (TLGLMSMSLVDLEVLAKSGTPRDRIHAAKILPVVKNQH) are Cytoplasmic-facing. A helical transmembrane segment spans residues 71–91 (LLLCTLLICNAAAMEALPIFL). At 92-94 (DAL) the chain is on the extracellular side. A helical membrane pass occupies residues 95–115 (VTAWGAILISVTLILLFGEII). At 116-136 (PQSVCSRHGLAIGATVAPFVR) the chain is on the cytoplasmic side. Residues 137 to 157 (VLVWICLPVAWPISKLLDFLL) traverse the membrane as a helical segment. Residues 158-423 (GHGRVALFRR…DETDHHFEDL (266 aa)) are Extracellular-facing. In terms of domain architecture, CBS 1 spans 210–271 (MTPISDTFVI…TINPDEEIQV (62 aa)). 2 N-linked (GlcNAc...) asparagine glycosylation sites follow: Asn273 and Asn322. CBS domains are found at residues 275 to 332 (TIRR…RVDV) and 356 to 415 (PNRA…IFDE).

It localises to the membrane. In Arabidopsis thaliana (Mouse-ear cress), this protein is DUF21 domain-containing protein At2g14520 (CBSDUF3).